We begin with the raw amino-acid sequence, 380 residues long: Cytochrome b (380 aa).

4 helical membrane passes run 34-54, 78-99, 114-134, and 179-199; these read FGSLLGICLATQILTGLLLAA, WLIRNLHANGASFFFICIYLHI, WNTGVILLLTLMATAFVGYVL, and FFTLHFLLPFMIMGLTLIHLT. Heme b is bound by residues His-84 and His-98. Residues His-183 and His-197 each coordinate heme b. Residue His-202 coordinates a ubiquinone. Helical transmembrane passes span 227–247, 289–309, 321–341, and 348–368; these read LKDTLGFMFMLLPLMTLALFS, LGGVLALAASVLILFLAPLLH, LFQLLFWTLTANLLILTWVGS, and FIIIGQLASLTYFTILLILFP.

The protein belongs to the cytochrome b family. In terms of assembly, the cytochrome bc1 complex contains 11 subunits: 3 respiratory subunits (MT-CYB, CYC1 and UQCRFS1), 2 core proteins (UQCRC1 and UQCRC2) and 6 low-molecular weight proteins (UQCRH/QCR6, UQCRB/QCR7, UQCRQ/QCR8, UQCR10/QCR9, UQCR11/QCR10 and a cleavage product of UQCRFS1). This cytochrome bc1 complex then forms a dimer. The cofactor is heme b.

It is found in the mitochondrion inner membrane. In terms of biological role, component of the ubiquinol-cytochrome c reductase complex (complex III or cytochrome b-c1 complex) that is part of the mitochondrial respiratory chain. The b-c1 complex mediates electron transfer from ubiquinol to cytochrome c. Contributes to the generation of a proton gradient across the mitochondrial membrane that is then used for ATP synthesis. This Grus nigricollis (Black-necked crane) protein is Cytochrome b (MT-CYB).